Reading from the N-terminus, the 441-residue chain is MSHEEDLIDYSDEELQTTDAAATTAAPAANGAQDKKGDLTVSGGRPDKKGSYVGIHSTGFRDFLLKGELLRAITDCGFEHPSEVQQVCIPTAILNVDVLCQAKSGLGKTAVFVLTTLHQLEPVPGECSVLVMCHTRELAYQIKNEYARFSKYLPDVKTAVFYGGTPIQKDVEVLSNKESYPNIVVGTPGRLNALVRDKKLSLRNVKAFVLDECDKMLDQIDMRRDVQEIFRATPADKQVMMFSATLSQEIRPICKKFMRNPLEVYVDDDTKLTLHGLQQYYIKLSESEKNRKLNELLDSLEFNQVIIFVKSTLRANELDKLLRECNFPSIAVHSGVSQEERIKRYKEFKEFNKRICVATDVFGRGIDIERINLAINYDLPADADSYLHRVGRAGRFGTKGLSISFVSNEDDEKVLKEIEKRFEVALPEYPEGGVDSSTYMA.

Over residues 19-29 (DAAATTAAPAA) the composition is skewed to low complexity. The disordered stretch occupies residues 19–43 (DAAATTAAPAANGAQDKKGDLTVSG). The Q motif signature appears at 58-86 (TGFRDFLLKGELLRAITDCGFEHPSEVQQ). The 176-residue stretch at 89–264 (IPTAILNVDV…KKFMRNPLEV (176 aa)) folds into the Helicase ATP-binding domain. 102-109 (AKSGLGKT) provides a ligand contact to ATP. Positions 211-214 (DECD) match the DEAD box motif. In terms of domain architecture, Helicase C-terminal spans 276-437 (GLQQYYIKLS…EYPEGGVDSS (162 aa)).

This sequence belongs to the DEAD box helicase family. DECD subfamily.

It is found in the nucleus. The enzyme catalyses ATP + H2O = ADP + phosphate + H(+). Its function is as follows. ATP-binding RNA helicase involved in transcription elongation and required for the export of mRNA out of the nucleus. SUB2 also plays a role in pre-mRNA splicing and spliceosome assembly. May be involved in rDNA and telomeric silencing, and maintenance of genome integrity. The polypeptide is ATP-dependent RNA helicase sub2 (sub2) (Aspergillus clavatus (strain ATCC 1007 / CBS 513.65 / DSM 816 / NCTC 3887 / NRRL 1 / QM 1276 / 107)).